The chain runs to 90 residues: LYR motif-containing protein 2 (90 aa).

The transit peptide at 1-19 (MASSRLPASALTLKQFIQR) directs the protein to the mitochondrion.

The protein belongs to the complex I LYR family.

It is found in the mitochondrion. Its function is as follows. Involved in efficient integration of the N-module into mitochondrial respiratory chain complex I. The protein is LYR motif-containing protein 2 (lyrm2) of Salmo salar (Atlantic salmon).